The following is a 144-amino-acid chain: Maximins 11/H1 (144 aa).

A signal peptide spans 1-18 (MNFKYIVAVSFLIASAYA). Positions 19 to 43 (RSEENDEQSLSQRDVLEEESLREIR) are excised as a propeptide. Position 70 is an asparagine amide (asparagine 70). Residues 74-123 (TAEDHEVMKRLEAVMRDLDSLDYPEEASERETRGFNQEEIANLFTKKEKR) constitute a propeptide that is removed on maturation. Leucine 143 carries the leucine amide modification.

The protein belongs to the bombinin family. As to expression, expressed by the skin glands.

Its subcellular location is the secreted. Its function is as follows. Maximin-11 shows antimicrobial activity against bacteria and against the fungus C.albicans. It has little hemolytic activity. Functionally, maximin-H1 shows antibacterial activity against both Gram-positive and Gram-negative bacteria. It also shows antimicrobial activity against the fungus C.albicans. Shows strong hemolytic activity. The polypeptide is Maximins 11/H1 (Bombina maxima (Giant fire-bellied toad)).